The sequence spans 423 residues: MGPMCLNRHMGILLKNISTLLTLQGAAAKQGRRIKEEDLSLLQQAAVVIEKNKIVWVGPQKKLPKEFARKKALRDYDMRGRTVLPGFVECHTHLIFAGDRAAEFEMRNQGVSYQEIAAKGGGILSTMKKTRASSLNDLVKAGQRRLDHFVSQGVTTVEIKSGYALNLKDELKMLQAAQKLSGIRTVNTFLGAHALPPEFKSYEDYLTFLADEVLPVVAKKKLARRVDVFIEKGFFPPEASEKYLRRAQELGFEILIHADQMSLSGGSEIAVRLGALSGDHLLQIEDKEIRKLAQSEVTGVLLPTADLYTKTKYPPARAMIDAGVRVALATDFNPGTSPTQNLNLVGLLARLEMKMSLPEVIAAYTVGGAHALNLQNEVGSLEVGKSADILCIDQDWQTLFYSVGEASEKVVFSRGKKVFGTLK.

The Fe(3+) site is built by H91 and H93. Residues H91 and H93 each coordinate Zn(2+). The 4-imidazolone-5-propanoate site is built by R100, Y163, and H193. Position 163 (Y163) interacts with N-formimidoyl-L-glutamate. H257 lines the Fe(3+) pocket. H257 contributes to the Zn(2+) binding site. Q260 lines the 4-imidazolone-5-propanoate pocket. Residue D331 coordinates Fe(3+). D331 contacts Zn(2+). N-formimidoyl-L-glutamate is bound by residues N333 and G335. T336 is a binding site for 4-imidazolone-5-propanoate.

Belongs to the metallo-dependent hydrolases superfamily. HutI family. The cofactor is Zn(2+). Fe(3+) serves as cofactor.

It is found in the cytoplasm. The enzyme catalyses 4-imidazolone-5-propanoate + H2O = N-formimidoyl-L-glutamate. It functions in the pathway amino-acid degradation; L-histidine degradation into L-glutamate; N-formimidoyl-L-glutamate from L-histidine: step 3/3. Catalyzes the hydrolytic cleavage of the carbon-nitrogen bond in imidazolone-5-propanoate to yield N-formimidoyl-L-glutamate. It is the third step in the universal histidine degradation pathway. This chain is Imidazolonepropionase, found in Bdellovibrio bacteriovorus (strain ATCC 15356 / DSM 50701 / NCIMB 9529 / HD100).